A 156-amino-acid chain; its full sequence is Ribosomal RNA large subunit methyltransferase H (156 aa).

S-adenosyl-L-methionine is bound by residues Leu73, Gly104, and 123-128 (LSSLTL).

Belongs to the RNA methyltransferase RlmH family. As to quaternary structure, homodimer.

It is found in the cytoplasm. It carries out the reaction pseudouridine(1915) in 23S rRNA + S-adenosyl-L-methionine = N(3)-methylpseudouridine(1915) in 23S rRNA + S-adenosyl-L-homocysteine + H(+). Its function is as follows. Specifically methylates the pseudouridine at position 1915 (m3Psi1915) in 23S rRNA. This chain is Ribosomal RNA large subunit methyltransferase H, found in Neisseria gonorrhoeae (strain ATCC 700825 / FA 1090).